Reading from the N-terminus, the 616-residue chain is Sialic acid TRAP transporter permease protein SiaT (616 aa).

Positions 1-190 are TRAP transporter small permease; that stretch reads MKYINKLEEW…RISNYIKLGS (190 aa). The next 17 helical transmembrane spans lie at 9–29, 36–56, 83–103, 117–137, 153–173, 195–215, 244–264, 288–308, 332–352, 357–377, 407–427, 431–451, 459–479, 505–525, 527–547, 552–572, and 587–607; these read EWLG…QILS, PLIW…MLGI, TNTF…HFGI, GGIS…LMMF, YLPA…LFFA, IALL…WSLF, FPLL…TGGI, IGAS…AGGL, ASCI…YGVI, IAKL…ALMA, FWAI…LFSP, AIVA…ELTL, IEAM…TFFG, VLVM…ALAL, FLVL…LIFF, TLNM…FVVA, and LPFL…PQII. The TRAP transporter large permease stretch occupies residues 191–616; sequence SSVYIALLVW…ITFVPNLLIP (426 aa).

This sequence in the N-terminal section; belongs to the TRAP transporter small permease family. The protein in the C-terminal section; belongs to the TRAP transporter large permease family. As to quaternary structure, the complex comprises the extracytoplasmic solute receptor protein SiaP, and the fused transmembrane protein SiaT.

It localises to the cell inner membrane. In terms of biological role, part of the tripartite ATP-independent periplasmic (TRAP) transport system SiaPT involved in the uptake of sialic acid. The polypeptide is Sialic acid TRAP transporter permease protein SiaT (siaT) (Haemophilus influenzae (strain 86-028NP)).